We begin with the raw amino-acid sequence, 832 residues long: Dolichyl-phosphate-mannose--protein mannosyltransferase 6 (832 aa).

The interval M1–T44 is disordered. N-linked (GlcNAc...) asparagine glycans are attached at residues N20 and N59. The next 7 membrane-spanning stretches (helical) occupy residues F135 to A155, Y175 to Y194, T206 to I227, M232 to I252, L266 to W286, A293 to F311, and L327 to A347. N-linked (GlcNAc...) asparagine glycosylation is present at N357. One can recognise an MIR 1 domain in the interval P383 to G437. The N-linked (GlcNAc...) asparagine glycan is linked to N453. MIR domains follow at residues H466–Q522 and P537–H595. 4 consecutive transmembrane segments (helical) span residues I676 to I696, L723 to I743, V755 to L775, and I787 to F807.

The protein belongs to the glycosyltransferase 39 family.

The protein resides in the endoplasmic reticulum membrane. The enzyme catalyses a di-trans,poly-cis-dolichyl beta-D-mannosyl phosphate + L-seryl-[protein] = 3-O-(alpha-D-mannosyl)-L-seryl-[protein] + a di-trans,poly-cis-dolichyl phosphate + H(+). It catalyses the reaction a di-trans,poly-cis-dolichyl beta-D-mannosyl phosphate + L-threonyl-[protein] = 3-O-(alpha-D-mannosyl)-L-threonyl-[protein] + a di-trans,poly-cis-dolichyl phosphate + H(+). It participates in protein modification; protein glycosylation. Functionally, protein mannosyltransferase (PMT) involved in hyphal morphogenesis and drug sensitivity. Transfers mannose from Dol-P-mannose to Ser or Thr residues on proteins. PMT1, PMT2 and PMT4 account for most of the protein-O-glycosylation activity, while PMT5 and PMT6 may specifically modulate a much narrower spectrum of target proteins. Required for biofilm formation and virulence. This chain is Dolichyl-phosphate-mannose--protein mannosyltransferase 6 (PMT6), found in Candida albicans (strain SC5314 / ATCC MYA-2876) (Yeast).